Reading from the N-terminus, the 271-residue chain is uncharacterized protein (271 aa).

This is an uncharacterized protein from Azospirillum brasilense.